We begin with the raw amino-acid sequence, 264 residues long: Triosephosphate isomerase (264 aa).

Substrate is bound at residue Asn13–Lys15. His106 serves as the catalytic Electrophile. Residue Glu179 is the Proton acceptor of the active site. Substrate-binding positions include Gly185, Ser223, and Gly244–Gly245.

It belongs to the triosephosphate isomerase family. In terms of assembly, homodimer.

The protein resides in the cytoplasm. It carries out the reaction D-glyceraldehyde 3-phosphate = dihydroxyacetone phosphate. Its pathway is carbohydrate biosynthesis; gluconeogenesis. The protein operates within carbohydrate degradation; glycolysis; D-glyceraldehyde 3-phosphate from glycerone phosphate: step 1/1. Functionally, involved in the gluconeogenesis. Catalyzes stereospecifically the conversion of dihydroxyacetone phosphate (DHAP) to D-glyceraldehyde-3-phosphate (G3P). In Acinetobacter baumannii (strain SDF), this protein is Triosephosphate isomerase.